A 561-amino-acid chain; its full sequence is Laccase-1 (561 aa).

A signal peptide spans M1–A20. Plastocyanin-like domains lie at V68–T185 and D191–S337. N71, N87, and N114 each carry an N-linked (GlcNAc...) asparagine glycan. Residues H119, H121, H163, and H165 each coordinate Cu cation. The cysteines at positions 140 and 542 are disulfide-linked. N-linked (GlcNAc...) asparagine glycans are attached at residues N226, N284, N327, N391, and N398. The 130-residue stretch at L396–S525 folds into the Plastocyanin-like 3 domain. Positions 445, 448, 450, 504, 505, 506, and 510 each coordinate Cu cation.

Belongs to the multicopper oxidase family. Cu cation serves as cofactor.

It is found in the secreted. The catalysed reaction is 4 hydroquinone + O2 = 4 benzosemiquinone + 2 H2O. In terms of biological role, lignin degradation and detoxification of lignin-derived products. This is Laccase-1 (lcc1) from Botryotinia fuckeliana (Noble rot fungus).